Here is a 462-residue protein sequence, read N- to C-terminus: Serine--tRNA ligase, cytoplasmic (462 aa).

246-248 (TSE) serves as a coordination point for L-serine. ATP contacts are provided by residues 279–281 (RRE) and valine 295. L-serine is bound at residue glutamate 302. 366 to 369 (ELVS) contributes to the ATP binding site. Threonine 404 lines the L-serine pocket.

Belongs to the class-II aminoacyl-tRNA synthetase family. Type-1 seryl-tRNA synthetase subfamily. In terms of assembly, homodimer. The tRNA molecule binds across the dimer.

Its subcellular location is the cytoplasm. It is found in the cytosol. It carries out the reaction tRNA(Ser) + L-serine + ATP = L-seryl-tRNA(Ser) + AMP + diphosphate + H(+). Catalyzes the attachment of serine to tRNA(Ser) in a two-step reaction: serine is first activated by ATP to form Ser-AMP and then transferred to the acceptor end of tRNA(Ser). This is Serine--tRNA ligase, cytoplasmic (SES1) from Candida albicans (strain SC5314 / ATCC MYA-2876) (Yeast).